A 186-amino-acid chain; its full sequence is Probable peptidoglycan L,D-endopeptidase MepK (186 aa).

Residues 1–30 (MNYVDQNKRKWLSLGGIALGISILPNSVLA) form the signal peptide. Zn(2+) contacts are provided by H134, D141, and H174.

The protein belongs to the peptidase M15 family. The cofactor is Zn(2+).

Its pathway is cell wall biogenesis; cell wall polysaccharide biosynthesis. In terms of biological role, l,D-endopeptidase that cleaves meso-diaminopimelic acid (mDAP)-mDAP cross-links in peptidoglycan. It works in conjunction with other elongation-specific D,D-endopeptidases to make space for efficient incorporation of nascent peptidoglycan strands into the sacculus and thus enable cell wall expansion. The protein is Probable peptidoglycan L,D-endopeptidase MepK of Haemophilus influenzae (strain ATCC 51907 / DSM 11121 / KW20 / Rd).